A 468-amino-acid chain; its full sequence is MSSGKIAQVIGPVVDVAFAAGDKLPEINNALVVYKNDEKKSKIVLEVALELGDGVVRTIAMESTDGLTRGLEVLDTGRPISVPVGKETLGRVFNVLGDTIDLDAPFPADAERQPIHKKAPTFDELSTSSEILETGIKVIDLLAPYLKGGKVGLFGGAGVGKTVLIQELIHNIAQEHGGISVFTGVGERTREGNDLYWEMKESGVIEKTAMVFGQMNEPPGARMRVALTGLTIAEYFRDVEGQDVLLFIDNIFRFTQAGSEVSALLGRMPSAVGYQPTLATEMGQLQERITSTKKGSVTSIQAIYVPADDYTDPAPATAFAHLDSTTNLERKLVQLGIYPAVDPLASSSRALSPEIVGEEHYAVAAEVKRVLQRYHELQDIIAILGMDELSDDEKTLVARARRIQFFLSQNFNVAEQFTGQPGSYVPVAETVRGFKEILEGKHDKLPEDAFRGVGSIEDVLAKAEKMGF.

155 to 162 (GGAGVGKT) provides a ligand contact to ATP.

This sequence belongs to the ATPase alpha/beta chains family. As to quaternary structure, F-type ATPases have 2 components, CF(1) - the catalytic core - and CF(0) - the membrane proton channel. CF(1) has five subunits: alpha(3), beta(3), gamma(1), delta(1), epsilon(1). CF(0) has three main subunits: a(1), b(2) and c(9-12). The alpha and beta chains form an alternating ring which encloses part of the gamma chain. CF(1) is attached to CF(0) by a central stalk formed by the gamma and epsilon chains, while a peripheral stalk is formed by the delta and b chains.

It is found in the cell membrane. The enzyme catalyses ATP + H2O + 4 H(+)(in) = ADP + phosphate + 5 H(+)(out). Produces ATP from ADP in the presence of a proton gradient across the membrane. The catalytic sites are hosted primarily by the beta subunits. The sequence is that of ATP synthase subunit beta from Streptococcus sanguinis (strain SK36).